The following is a 241-amino-acid chain: Small ribosomal subunit protein uS3c (241 aa).

This sequence belongs to the universal ribosomal protein uS3 family. As to quaternary structure, part of the 30S ribosomal subunit.

The protein resides in the plastid. This is Small ribosomal subunit protein uS3c (rps3) from Helicosporidium sp. subsp. Simulium jonesii (Green alga).